The sequence spans 588 residues: Calcium/calmodulin-dependent protein kinase kinase 2 (588 aa).

Residues 1–14 are compositionally biased toward polar residues; that stretch reads MSSCVSSQPSSNRA. 2 disordered regions span residues 1–33 and 78–100; these read MSSC…SQKP and GQEV…RKLS. S2 carries the post-translational modification N-acetylserine. 5 positions are modified to phosphoserine: S100, S114, S129, S133, and S137. The span at 128 to 139 shows a compositional bias: low complexity; sequence YSPVSSPQSSPR. Residues 128–149 are disordered; that stretch reads YSPVSSPQSSPRLPRRPTVESH. A Protein kinase domain is found at 165 to 446; it reads YTLKDEIGKG…VPEIKLHPWV (282 aa). ATP-binding positions include 171 to 179 and K194; that span reads IGKGSYGVV. An RP domain region spans residues 204–226; it reads QAGFPRRPPPRGTRPAPGGCIQP. The segment at 205 to 225 is disordered; it reads AGFPRRPPPRGTRPAPGGCIQ. Catalysis depends on D312, which acts as the Proton acceptor. An autoinhibitory domain region spans residues 472 to 477; sequence ENSVKH. The segment at 475–500 is calmodulin-binding; that stretch reads VKHIPSLATVILVKTMIRKRSFGNPF. Phosphoserine is present on residues P479, S495, S511, T522, and S572. A disordered region spans residues 497 to 588; that stretch reads GNPFEGSRRE…LRPEEAMEPE (92 aa). Residues 521-536 show a composition bias toward basic and acidic residues; that stretch reads PTRECESLSELKEARQ. Residues 579 to 588 are compositionally biased toward basic and acidic residues; that stretch reads LRPEEAMEPE.

It belongs to the protein kinase superfamily. Ser/Thr protein kinase family. In terms of assembly, interacts with calmodulin. Post-translationally, autophosphorylated and phosphorylated by PKA. Each isoform may show a different pattern of phosphorylation. As to expression, ubiquitously expressed with higher levels in the brain. Intermediate levels are detected in spleen, prostate, thyroid and leukocytes. The lowest level is in lung.

It is found in the nucleus. Its subcellular location is the cytoplasm. The protein resides in the cell projection. It localises to the neuron projection. It carries out the reaction L-seryl-[protein] + ATP = O-phospho-L-seryl-[protein] + ADP + H(+). The catalysed reaction is L-threonyl-[protein] + ATP = O-phospho-L-threonyl-[protein] + ADP + H(+). Activated by Ca(2+)/calmodulin. Binding of calmodulin may relieve intrasteric autoinhibition. Autophosphorylation does not alter activity or regulation by Ca(2+)/calmodulin. In part, activity is independent on Ca(2+)/calmodulin. In terms of biological role, calcium/calmodulin-dependent protein kinase belonging to a proposed calcium-triggered signaling cascade involved in a number of cellular processes. Isoform 1, isoform 2 and isoform 3 phosphorylate CAMK1 and CAMK4. Isoform 3 phosphorylates CAMK1D. Isoform 4, isoform 5 and isoform 6 lacking part of the calmodulin-binding domain are inactive. Efficiently phosphorylates 5'-AMP-activated protein kinase (AMPK) trimer, including that consisting of PRKAA1, PRKAB1 and PRKAG1. This phosphorylation is stimulated in response to Ca(2+) signals. Seems to be involved in hippocampal activation of CREB1. May play a role in neurite growth. Isoform 3 may promote neurite elongation, while isoform 1 may promoter neurite branching. The polypeptide is Calcium/calmodulin-dependent protein kinase kinase 2 (CAMKK2) (Homo sapiens (Human)).